The primary structure comprises 438 residues: V-type ATP synthase beta chain (438 aa).

It belongs to the ATPase alpha/beta chains family.

Its function is as follows. Produces ATP from ADP in the presence of a proton gradient across the membrane. The V-type beta chain is a regulatory subunit. The chain is V-type ATP synthase beta chain from Chlamydia felis (strain Fe/C-56) (Chlamydophila felis).